A 310-amino-acid polypeptide reads, in one-letter code: Cytochrome P450 monooxygenase ppzG (310 aa).

Cys-288 serves as a coordination point for heme.

It belongs to the cytochrome P450 family. Heme serves as cofactor.

It functions in the pathway secondary metabolite biosynthesis. Its function is as follows. Cytochrome P450 monooxygenase; part of the gene cluster that mediates the biosynthesis of pyrrolopyrazines, secondary metabolites showing insecticidal activity. The role of ppzG within the pathway has still to be determined. The single multifunctional NRPS ppzA is sufficient to produce peramine via condensation of 1-pyrroline-5-carboxylate and arginine, N-methylation of the alpha-amino group of arginine and reduction of the thioester and the cyclization to form an iminium ion resulting in release from the peptide synthetase. Deprotonation of this intermediate and oxidation of the pyrroline ring would give rise to peramine. In Epichloe species that produce only peramine, the peramine synthetase gene is not localized in a gene cluster, in contrast to Metarhizium species that contain additional pyrrolopyrazine biosynthesis genes. The 2-oxoglutarate-Fe(II) type oxidoreductase ppzC hydroxylates peramine to yield the newly identified compound 8-hydroxyperamine whereas ppzD converts L-proline into trans-4-hydroxy-L-proline, a precursor of peramine biosynthesis. This chain is Cytochrome P450 monooxygenase ppzG (ppzG), found in Metarhizium majus (strain ARSEF 297).